The sequence spans 293 residues: Exosome complex component RRP4 (293 aa).

The S1 motif domain occupies 79–159 (EVGDIVVGRI…SDGAVSLHTR (81 aa)). Position 124 is a phosphoserine (Ser124).

It belongs to the RRP4 family. In terms of assembly, component of the RNA exosome core complex (Exo-9), composed of EXOSC1, EXOSC2, EXOSC3, EXOSC4, EXOSC5, EXOSC6, EXOSC7, EXOSC8 and EXOSC9; within the complex interacts with EXOSC4 and EXOSC7. The catalytically inactive RNA exosome core complex (Exo-9) associates with the catalytic subunit EXOSC10/RRP6. Exo-9 may associate with DIS3 to form the nucleolar exosome complex, or DIS3L to form the cytoplasmic exosome complex. Exo-9 is formed by a hexameric base ring consisting of the heterodimers EXOSC4-EXOSC9, EXOSC5-EXOSC8 and EXOSC6-EXOSC7, and a cap ring consisting of EXOSC1, EXOSC2 and EXOSC3. The RNA exosome complex associates with cofactors C1D/RRP47, MPHOSPH6/MPP6 and MTREX/MTR4. Interacts with GTPBP1. Interacts with ZFP36L1 (via N-terminus).

It localises to the cytoplasm. Its subcellular location is the nucleus. It is found in the nucleolus. Functionally, non-catalytic component of the RNA exosome complex which has 3'-&gt;5' exoribonuclease activity and participates in a multitude of cellular RNA processing and degradation events. In the nucleus, the RNA exosome complex is involved in proper maturation of stable RNA species such as rRNA, snRNA and snoRNA, in the elimination of RNA processing by-products and non-coding 'pervasive' transcripts, such as antisense RNA species and promoter-upstream transcripts (PROMPTs), and of mRNAs with processing defects, thereby limiting or excluding their export to the cytoplasm. The RNA exosome may be involved in Ig class switch recombination (CSR) and/or Ig variable region somatic hypermutation (SHM) by targeting AICDA deamination activity to transcribed dsDNA substrates. In the cytoplasm, the RNA exosome complex is involved in general mRNA turnover and specifically degrades inherently unstable mRNAs containing AU-rich elements (AREs) within their 3' untranslated regions, and in RNA surveillance pathways, preventing translation of aberrant mRNAs. It seems to be involved in degradation of histone mRNA. The catalytic inactive RNA exosome core complex of 9 subunits (Exo-9) is proposed to play a pivotal role in the binding and presentation of RNA for ribonucleolysis, and to serve as a scaffold for the association with catalytic subunits and accessory proteins or complexes. EXOSC2 as peripheral part of the Exo-9 complex stabilizes the hexameric ring of RNase PH-domain subunits through contacts with EXOSC4 and EXOSC7. In Homo sapiens (Human), this protein is Exosome complex component RRP4.